Reading from the N-terminus, the 645-residue chain is Sodium-dependent phosphate transporter 2 (645 aa).

The Extracellular portion of the chain corresponds to 1 to 5 (MAMDE). A helical membrane pass occupies residues 6 to 26 (YLWMVILGFIIAFILAFSVGA). Residues 27–46 (NDVANSFGTAVGSGVVTLRQ) lie on the Cytoplasmic side of the membrane. The chain crosses the membrane as a helical span at residues 47–67 (ACILASIFETTGSVLLGAKVG). Over 68-86 (ETIRKGIIDVNLYNNTVET) the chain is Extracellular. The N-linked (GlcNAc...) asparagine glycan is linked to Asn81. Residues 87-107 (LMAGEVSAMVGSAVWQLIASF) traverse the membrane as a helical segment. Over 108 to 109 (LR) the chain is Cytoplasmic. A helical membrane pass occupies residues 110-130 (FPISGTHCIVGATIGFSLVAI). Residues 131-142 (GTQGVQWMELVK) lie on the Extracellular side of the membrane. Residues 143 to 163 (IVASWFISPLLSGFMSGVLFV) form a helical membrane-spanning segment. The Cytoplasmic segment spans residues 164–190 (LIRMFILKKEDPVPNGLRALPVFYAAT). Residues 191 to 211 (IAINVFSIMYTGAPVMGLVLP) traverse the membrane as a helical segment. Residues 212 to 213 (MW) are Extracellular-facing. A helical membrane pass occupies residues 214–234 (AIALISFGVALLFALFVWLFV). Residues 235–475 (CPWMRRKITG…EEKEEKDSPE (241 aa)) lie on the Cytoplasmic side of the membrane. Ser253, Ser256, Ser259, Ser268, Ser316, and Ser379 each carry phosphoserine. The segment at 275 to 320 (PGAKAHDDSTVPLTGSAADPSGTSESMSGGHHPRAPYGRALSMTHG) is disordered. The interval 448-471 (RLAPPLAEPEPPRDDPADEEKEEK) is disordered. A helical transmembrane segment spans residues 476-496 (VHLLFHFLQVLTACFGSFAHG). Residues 497-523 (GNDVSNAIGPLVALWLIYEQGAVLQEA) lie on the Extracellular side of the membrane. A helical membrane pass occupies residues 524 to 544 (ATPVWLLFYGGVGICTGLWVW). Topologically, residues 545-564 (GRRVIQTMGKDLTPITPSSG) are cytoplasmic. A helical membrane pass occupies residues 565–579 (FTIELASAFTVVIAS). Residues 580-586 (NIGLPVS) lie on the Extracellular side of the membrane. Residues 587-602 (TTHCKVGSVVAVGWIR) traverse the membrane as a helical segment. At 603 to 614 (SRKAVDWRLFRN) the chain is on the cytoplasmic side. The helical transmembrane segment at 615–635 (IFVAWFVTVPVAGLFSAAIMA) threads the bilayer. The Extracellular segment spans residues 636–645 (LLIHGILPFV).

This sequence belongs to the inorganic phosphate transporter (PiT) (TC 2.A.20) family. Homodimer.

The protein localises to the cell membrane. Its subcellular location is the apical cell membrane. It carries out the reaction 2 Na(+)(out) + phosphate(out) = 2 Na(+)(in) + phosphate(in). Sodium-phosphate symporter which preferentially transports the monovalent form of phosphate with a stoichiometry of two sodium ions per phosphate ion. Plays a critical role in the determination of bone quality and strength by providing phosphate for bone mineralization. Required to maintain normal cerebrospinal fluid phosphate levels. Mediates phosphate-induced calcification of vascular smooth muscle cells (VCMCs) and can functionally compensate for loss of SLC20A1 in VCMCs. This is Sodium-dependent phosphate transporter 2 (SLC20A2) from Bos taurus (Bovine).